Consider the following 141-residue polypeptide: Large ribosomal subunit protein uL11 (141 aa).

Belongs to the universal ribosomal protein uL11 family. Part of the ribosomal stalk of the 50S ribosomal subunit. Interacts with L10 and the large rRNA to form the base of the stalk. L10 forms an elongated spine to which L12 dimers bind in a sequential fashion forming a multimeric L10(L12)X complex. Post-translationally, one or more lysine residues are methylated.

Functionally, forms part of the ribosomal stalk which helps the ribosome interact with GTP-bound translation factors. This chain is Large ribosomal subunit protein uL11, found in Streptococcus mutans serotype c (strain ATCC 700610 / UA159).